We begin with the raw amino-acid sequence, 472 residues long: WASH complex subunit 1 (472 aa).

The segment at 1–51 is required for WASH complex assembly; sequence MPQNRSVESQAYSLPLILPDLRREEAIHQITDTLQHLQTVSNDIFSRILQR. Disordered regions lie at residues 294-411 and 429-472; these read DRQD…GGDL and KVPA…DWES. A compositionally biased stretch (pro residues) spans 301–334; it reads LPPPPPPPPPPPPPPPPEPSALSPPAPPPPPLSI. Residues 352-472 form a VCA region; the sequence is QGAPKEVVNP…GDGDEDDWES (121 aa). A WH2 domain is found at 364-386; it reads GRASLLESIRQAGGIGKANLRNV. A compositionally biased stretch (basic and acidic residues) spans 385–400; that stretch reads NVKEKKLEKKKMKEQE.

This sequence belongs to the WASH1 family. As to quaternary structure, component of the WASH complex.

The protein localises to the early endosome membrane. It localises to the recycling endosome membrane. Acts as a nucleation-promoting factor at the surface of endosomes, where it recruits and activates the Arp2/3 complex to induce actin polymerization, playing a key role in the fission of tubules that serve as transport intermediates during endosome sorting. The sequence is that of WASH complex subunit 1 from Xenopus laevis (African clawed frog).